The sequence spans 156 residues: ADP-ribose 1''-phosphate phosphatase (156 aa).

Residues 1 to 156 form the Macro domain; sequence MIQYIKGDLF…DNLHFNVYVI (156 aa). Substrate-binding positions include 7 to 9, 25 to 27, 32 to 37, and 127 to 133; these read GDL, ACN, WGGGIA, and INAGIFG.

The protein belongs to the POA1 family.

The catalysed reaction is ADP-alpha-D-ribose 1''-phosphate + H2O = ADP-D-ribose + phosphate. Highly specific phosphatase involved in the metabolism of ADP-ribose 1''-phosphate (Appr1p) which is produced as a consequence of tRNA splicing. In Candida albicans (strain SC5314 / ATCC MYA-2876) (Yeast), this protein is ADP-ribose 1''-phosphate phosphatase (POA1).